The chain runs to 294 residues: Mitochondrial HMG-box protein CIM1 (294 aa).

Residues 1–90 (MKATLLLKAQ…RLYYASFCQS (90 aa)) constitute a mitochondrion transit peptide. The interval 27–102 (NRTPYTAFQY…IDILNVSKIE (76 aa)) is HMG-box A. The HMG-box B stretch occupies residues 110 to 258 (PIPAMSEYLL…IQILQKNMDI (149 aa)).

The protein localises to the mitochondrion matrix. Functionally, mitochondrial HMG-box protein that limits the copy number of mitochondrial DNA (mtDNA), antagonizing HMG-box containing protein ABF2, a mtDNA packaging factor. The protein is Mitochondrial HMG-box protein CIM1 of Saccharomyces cerevisiae (strain ATCC 204508 / S288c) (Baker's yeast).